The sequence spans 170 residues: Cathelicidin antimicrobial peptide (170 aa).

A signal peptide spans 1 to 30 (MKTQRDGPSLGRWSLVLLLLGLTMPLAVIA). A propeptide spans 31–131 (RVLSYQEAVL…DISCDKDKRK (101 aa)) (cathelin-like domain (CLD)). 2 disulfide bridges follow: Cys-86–Cys-97 and Cys-108–Cys-125. The interval 150 to 162 (LKNIGQRIKDFFG) is active core.

The protein belongs to the cathelicidin family. As to quaternary structure, monomer, homodimer or homotrimer (in vitro). Oligomerizes as tetra- or hexamer in solution (in vitro). Post-translationally, proteolytically cleaved by proteinase PRTN3 into antibacterial peptide LL-37. Proteolytically cleaved by cathepsin CTSG and neutrophil elastase ELANE. Resistant to proteolytic degradation in solution, and when bound to both zwitterionic (mimicking mammalian membranes) and negatively charged membranes (mimicking bacterial membranes). In terms of processing, after secretion onto the skin surface, the CAMP gene product is processed by a serine protease-dependent mechanism into multiple novel antimicrobial peptides distinct from and shorter than cathelicidin LL-37. These peptides show enhanced antimicrobial action, acquiring the ability to kill skin pathogens such as S.aureus, E.coli and C.albicans. These peptides have lost the ability to stimulate CXCL8/IL8 release from keratinocytes. The peptides act synergistically, killing bacteria at lower concentrations when present together, and maintain activity at increased salt condition.

Its subcellular location is the secreted. It localises to the vesicle. Its function is as follows. Antimicrobial protein that is an integral component of the innate immune system. Binds to bacterial lipopolysaccharides (LPS). Acts via neutrophil N-formyl peptide receptors to enhance the release of CXCL2. Postsecretory processing generates multiple cathelicidin antimicrobial peptides with various lengths which act as a topical antimicrobial defense in sweat on skin. The unprocessed precursor form, cathelicidin antimicrobial peptide, inhibits the growth of Gram-negative E.coli and E.aerogenes with efficiencies comparable to that of the mature peptide LL-37 (in vitro). Antimicrobial peptide that is an integral component of the innate immune system. Binds to bacterial lipopolysaccharides (LPS). Causes membrane permeabilization by forming transmembrane pores (in vitro). Causes lysis of E.coli. Exhibits antimicrobial activity against Gram-negative bacteria such as P.aeruginosa, S.typhimurium, E.aerogenes, E.coli and P.syringae, Gram-positive bacteria such as L.monocytogenes, S.epidermidis, S.pyogenes and S.aureus, as well as vancomycin-resistant enterococci (in vitro). Exhibits antimicrobial activity against methicillin-resistant S.aureus, P.mirabilis, and C.albicans in low-salt media, but not in media containing 100 mM NaCl (in vitro). Forms chiral supramolecular assemblies with quinolone signal (PQS) molecules of P.aeruginosa, which may lead to interference of bacterial quorum signaling and perturbance of bacterial biofilm formation. May form supramolecular fiber-like assemblies on bacterial membranes. Induces cytokine and chemokine producation as well as TNF/TNFA and CSF2/GMCSF production in normal human keratinocytes. Exhibits hemolytic activity against red blood cells. Functionally, exhibits antimicrobial activity against E.coli and B.megaterium (in vitro). This chain is Cathelicidin antimicrobial peptide, found in Ateles fusciceps robustus (Colombian black-faced spider monkey).